The chain runs to 125 residues: Sulfiredoxin, chloroplastic/mitochondrial (125 aa).

A chloroplast and mitochondrion-targeting transit peptide spans methionine 1 to serine 22.

The protein belongs to the sulfiredoxin family. In terms of tissue distribution, low expression in photosynthetic tissues such as leaves and sepals.

The protein resides in the plastid. It is found in the chloroplast. Its subcellular location is the mitochondrion. The enzyme catalyses S-hydroxy-S-oxy-L-cysteinyl-[peroxiredoxin] + [protein]-dithiol + ATP = S-hydroxy-L-cysteinyl-[peroxiredoxin] + [protein]-disulfide + ADP + phosphate. Contributes to oxidative stress resistance by reducing cysteine-sulfinic acid formed under exposure to oxidants in a peroxiredoxin. May catalyze the reduction in a multi-step process by acting both as a specific phosphotransferase and a thioltransferase. Required to switch on the antioxidant pathway to regenerate the oxidative damage. In mitochondrion, catalyzes the retroreduction of the inactive sulfinic form of atypical Prx IIF using thioredoxin as reducing agent. The chain is Sulfiredoxin, chloroplastic/mitochondrial (SRX) from Arabidopsis thaliana (Mouse-ear cress).